Here is a 1018-residue protein sequence, read N- to C-terminus: Fibronectin-binding protein A (1018 aa).

The first 36 residues, 1–36 (MKNNLRYGIRKHKLGAASVFLGTMIVVGMGQDKEAA), serve as a signal peptide directing secretion. The short motif at 7–18 (YGIRKHKLGAAS) is the YSIRK-G/S signaling motif element. The tract at residues 37–511 (ASEQKTTTVE…SNKANGNGKN (475 aa)) is ligand-binding A region. 2 disordered regions span residues 38 to 61 (SEQKTTTVEENGNSATDNKTSETQ) and 78 to 195 (ATVT…ETGT). 2 stretches are compositionally biased toward polar residues: residues 39–61 (EQKTTTVEENGNSATDNKTSETQ) and 78–92 (ATVTEQPSNATQVTT). Basic and acidic residues predominate over residues 112–126 (TVKEEVVKEEAKPQV). Positions 129-139 (TTQSQDNSGDQ) are enriched in polar residues. The segment at 194–511 (GTDVTSKVTV…SNKANGNGKN (318 aa)) is fibrinogen/elastin/tropoelastin-binding. The segment at 512-872 (GPIIQNNKFE…EGQQTIEEDT (361 aa)) is fibronectin-binding. A B-1 repeat occupies 545 to 574 (EEYDSSTLDIDYHTAIDGGGGYVDGYIETI). The tract at residues 545–604 (EEYDSSTLDIDYHTAIDGGGGYVDGYIETIEETDSSAIDIDYHTAVDSEAGHVGGYTESS) is 2 X approximate tandem repeats. One copy of the B-2 repeat lies at 575 to 604 (EETDSSAIDIDYHTAVDSEAGHVGGYTESS). Disordered stretches follow at residues 595–622 (GHVGGYTESSEESNPIDFEESTHENSKH), 740–813 (LGYE…DIDF), and 827–997 (EIIE…GMLF). Residues 745–782 (GQNSGNQSFEEDTEEDKPKYEQGGNIVDIDFDSVPQIH) form a D-1 repeat. The segment at 745 to 878 (GQNSGNQSFE…EEDTTPPIVP (134 aa)) is 4 X approximate tandem repeats. The stretch at 783-820 (GQNKGNQSFEEDTEKDKPKYEHGGNIIDIDFDSVPHIH) is one D-2 repeat. The stretch at 821–859 (GFNKHTEIIEEDTNKDKPSYQFGGHNSVDFEEDTLPKVS) is one D-3 repeat. Residues 827–838 (EIIEEDTNKDKP) are compositionally biased toward basic and acidic residues. The D-4; truncated repeat unit spans residues 860–878 (GQNEGQQTIEEDTTPPIVP). Over residues 875 to 938 (PIVPPTPPTP…PAEPGKPVPP (64 aa)) the composition is skewed to pro residues. WR repeat units lie at residues 879 to 892 (PTPPTPEVPSEPET), 893 to 906 (PTPPTPEVPSEPET), 907 to 920 (PTPPTPEVPSEPET), 921 to 934 (PTPPTPEVPAEPGK), and 935 to 948 (PVPPAKEEPKKPSK). Residues 879 to 948 (PTPPTPEVPS…AKEEPKKPSK (70 aa)) are 5 X tandem repeats, Pro-rich (WR). The LPXTG sorting signal signature appears at 982–986 (LPETG). The residue at position 985 (T985) is a Pentaglycyl murein peptidoglycan amidated threonine. Residues 986–1018 (GGEESTNKGMLFGGLFSILGLALLRRNKKNHKA) constitute a propeptide, removed by sortase.

The protein resides in the secreted. Its subcellular location is the cell wall. Functionally, promotes bacterial attachment to multiple substrates, such as fibronectin (Fn), fibrinogen (Fg), elastin peptides and tropoelastin. This confers to S.aureus the ability to invade endothelial cells. Promotes adherence to and aggregation of activated platelets. The sequence is that of Fibronectin-binding protein A from Staphylococcus aureus (strain USA300).